Reading from the N-terminus, the 120-residue chain is Kidney androgen-regulated protein (120 aa).

The signal sequence occupies residues 1–18 (MMICKVLVITVFCVLTVA).

It localises to the secreted. The polypeptide is Kidney androgen-regulated protein (Kap) (Rattus norvegicus (Rat)).